The following is a 274-amino-acid chain: NH(3)-dependent NAD(+) synthetase (274 aa).

46–53 provides a ligand contact to ATP; that stretch reads GISGGQDS. D52 provides a ligand contact to Mg(2+). R140 contacts deamido-NAD(+). T160 is a binding site for ATP. E165 contacts Mg(2+). Residues K173 and D180 each coordinate deamido-NAD(+). Residues K189 and T211 each contribute to the ATP site. 260–261 is a binding site for deamido-NAD(+); that stretch reads HK.

This sequence belongs to the NAD synthetase family. In terms of assembly, homodimer.

The enzyme catalyses deamido-NAD(+) + NH4(+) + ATP = AMP + diphosphate + NAD(+) + H(+). Its pathway is cofactor biosynthesis; NAD(+) biosynthesis; NAD(+) from deamido-NAD(+) (ammonia route): step 1/1. In terms of biological role, catalyzes the ATP-dependent amidation of deamido-NAD to form NAD. Uses ammonia as a nitrogen source. This chain is NH(3)-dependent NAD(+) synthetase, found in Streptococcus pyogenes serotype M6 (strain ATCC BAA-946 / MGAS10394).